The chain runs to 457 residues: MVCVSNNKSYLKSQHLKIIGQKTLRGKVKISGAKNSALVLLAASLLTDEKIILDNVPLLTDIEKMGNILKNLGVKLHNKDHQLIIDSKNISIQELPYELVNGLRASFFCIGALLTRFGEASIPLPGGCNIGERPINEHINGLRALGAEIIIDRDVVKAKLVKKKTKLFGANIRLNCPSVGATETLIMAASLAEGRTVIENAAREPEIQDLCQMLNKMGAKIYDSGKEKIIIDGVHKLHGCTHKVIPDRIEAGTFLIAAAATSSSITVSPVIPNHLEAVLNKLEESGSKIIIKGNSISIKGNNIKAVDIKTAPFPGFPTDLQAPFMALMTIAKGRSKITETIFENRMNHVDLLNQMGSSITLKNNIAHINGVKKLRGMTLVGSDLRSSAALIIAALTSKSVSYVYGLEHLDRGYENFEQKLSKLGIEIKRQITKQTINKSKNRSSNSKLKEVSEIRAA.

34-35 (KN) is a binding site for phosphoenolpyruvate. R104 provides a ligand contact to UDP-N-acetyl-alpha-D-glucosamine. Catalysis depends on C128, which acts as the Proton donor. Residue C128 is modified to 2-(S-cysteinyl)pyruvic acid O-phosphothioketal. UDP-N-acetyl-alpha-D-glucosamine is bound by residues D319 and I341. Positions 436–457 (INKSKNRSSNSKLKEVSEIRAA) are disordered. Over residues 447-457 (KLKEVSEIRAA) the composition is skewed to basic and acidic residues.

Belongs to the EPSP synthase family. MurA subfamily.

The protein localises to the cytoplasm. The enzyme catalyses phosphoenolpyruvate + UDP-N-acetyl-alpha-D-glucosamine = UDP-N-acetyl-3-O-(1-carboxyvinyl)-alpha-D-glucosamine + phosphate. The protein operates within cell wall biogenesis; peptidoglycan biosynthesis. Functionally, cell wall formation. Adds enolpyruvyl to UDP-N-acetylglucosamine. In Prochlorococcus marinus subsp. pastoris (strain CCMP1986 / NIES-2087 / MED4), this protein is UDP-N-acetylglucosamine 1-carboxyvinyltransferase.